Here is a 215-residue protein sequence, read N- to C-terminus: MSKVYDWFNDRLEIQGIADDITSKYVPPHVNIFYCIGGITFTCFIMQVASGFAMTFYYRPTVTEAFASVQYIMTDVNFGWLIRSIHKWSASMMVLTMILHVFRVYLTGGFKKPRELTWVTGVILAVCTVSFGVTGYSLPWDQVGYWAVKIVTGVPDAIPVIGAPLVELLRGGVGVGQSTLTRFYSLHTFVLPLLTAVFMLAHFLMIRKQGISGPL.

A helical transmembrane segment spans residues 32–52 (IFYCIGGITFTCFIMQVASGF). Cysteine 35 is a heme c binding site. Residues histidine 86 and histidine 100 each contribute to the heme b site. Transmembrane regions (helical) follow at residues 90-110 (ASMMVLTMILHVFRVYLTGGF), 116-136 (LTWVTGVILAVCTVSFGVTGY), and 186-206 (LHTFVLPLLTAVFMLAHFLMI). Residues histidine 187 and histidine 202 each coordinate heme b.

This sequence belongs to the cytochrome b family. PetB subfamily. In terms of assembly, the 4 large subunits of the cytochrome b6-f complex are cytochrome b6, subunit IV (17 kDa polypeptide, PetD), cytochrome f and the Rieske protein, while the 4 small subunits are PetG, PetL, PetM and PetN. The complex functions as a dimer. Heme b serves as cofactor. The cofactor is heme c.

It is found in the plastid. It localises to the chloroplast thylakoid membrane. In terms of biological role, component of the cytochrome b6-f complex, which mediates electron transfer between photosystem II (PSII) and photosystem I (PSI), cyclic electron flow around PSI, and state transitions. The protein is Cytochrome b6 of Mesostigma viride (Green alga).